The following is an 83-amino-acid chain: MAGKGVGTPLSALFLLVLLVVTIGMMEVQVAEGRMCKTPSAKFKGYCVSSTNCKNVCRTEGFPTGSCDFHITSRKCYCYKPCP.

The N-terminal stretch at 1–33 is a signal peptide; sequence MAGKGVGTPLSALFLLVLLVVTIGMMEVQVAEG. 4 disulfide bridges follow: Cys-36–Cys-82, Cys-47–Cys-67, Cys-53–Cys-76, and Cys-57–Cys-78.

Belongs to the DEFL family.

It localises to the secreted. Its function is as follows. Plant defense peptide. Has antifungal activity. The polypeptide is Defensin-2 (Pinus sylvestris (Scotch pine)).